The chain runs to 220 residues: Metalloproteinase inhibitor 2 (220 aa).

Residues 1-26 (MPGAALPSLLAWLAVLLLGRARPADA) form the signal peptide. Cys-27 contributes to the Zn(2+) binding site. Involved in metalloproteinase-binding regions lie at residues 27 to 30 (CSCS) and 95 to 96 (TE). Cystine bridges form between Cys-27/Cys-98, Cys-29/Cys-127, Cys-39/Cys-152, Cys-154/Cys-201, Cys-159/Cys-164, and Cys-172/Cys-193. The NTR domain maps to 27–152 (CSCSPIHPQQ…SLNQRYQMGC (126 aa)).

It belongs to the protease inhibitor I35 (TIMP) family. The activity of TIMP2 is dependent on the presence of disulfide bonds.

The protein localises to the secreted. Complexes with metalloproteinases (such as collagenases) and irreversibly inactivates them by binding to their catalytic zinc cofactor. This Gallus gallus (Chicken) protein is Metalloproteinase inhibitor 2 (TIMP2).